Here is a 160-residue protein sequence, read N- to C-terminus: Phosphopantetheine adenylyltransferase (160 aa).

Position 9 (Ser-9) interacts with substrate. Residues 9–10 (SF) and His-17 each bind ATP. Residues Lys-41, Leu-73, and Lys-87 each coordinate substrate. ATP contacts are provided by residues 88–90 (GLR), Glu-98, and 123–129 (YSYLSSS).

It belongs to the bacterial CoaD family. In terms of assembly, homohexamer. It depends on Mg(2+) as a cofactor.

The protein localises to the cytoplasm. It carries out the reaction (R)-4'-phosphopantetheine + ATP + H(+) = 3'-dephospho-CoA + diphosphate. It participates in cofactor biosynthesis; coenzyme A biosynthesis; CoA from (R)-pantothenate: step 4/5. In terms of biological role, reversibly transfers an adenylyl group from ATP to 4'-phosphopantetheine, yielding dephospho-CoA (dPCoA) and pyrophosphate. In Clostridium tetani (strain Massachusetts / E88), this protein is Phosphopantetheine adenylyltransferase.